The sequence spans 271 residues: Cell surface glycoprotein CD200 receptor 2 (271 aa).

An N-terminal signal peptide occupies residues 1-23 (MSAPRLLISIIIMVSASSSSCMG). Topologically, residues 24–239 (GKQMTQNYST…TSGSPALSLL (216 aa)) are extracellular. Asn30, Asn39, Asn86, Asn92, Asn189, and Asn217 each carry an N-linked (GlcNAc...) asparagine glycan. The 87-residue stretch at 46 to 132 (MDINAVLCCP…YRGIVVTPDG (87 aa)) folds into the Ig-like V-type domain. The 89-residue stretch at 133–221 (NFHRGYHLQV…SHLTGNKSLS (89 aa)) folds into the Ig-like C2-type domain. Residues Cys160 and Cys209 are joined by a disulfide bond. The helical transmembrane segment at 240 to 260 (IILYVKLSLFVVILVTTGFVF) threads the bilayer. Residues 261–271 (FQRINHVRKVL) are Cytoplasmic-facing.

The protein belongs to the CD200R family.

It localises to the membrane. Its function is as follows. May be a receptor for the CD200/OX2 cell surface glycoprotein. This is Cell surface glycoprotein CD200 receptor 2 (CD200R1L) from Homo sapiens (Human).